A 332-amino-acid chain; its full sequence is MNKKVLTLSAVMASMLFGAAAHAADTRIGVTIYKYDDNFMSVVRKAIEQDAKAAPDVQLLMNDSQNDQSKQNDQIDVLLAKGVKALAINLVDPAAAGTVIEKARGQNVPVVFFNKEPSRKALDSYDKAYYVGTDSKESGIIQGDLIAKHWAANQGWDLNKDGQIQFVLLKGEPGHPDAEARTTYVIKELNDKGIKTEQLQLDTAMWDTAQAKDKMDAWLSGPNANKIEVVIANNDAMAMGAVEALKAHNKSSIPVFGVDALPEALALVKSGALAGTVLNDANNQAKATFDLAKNLADGKGAADGTNWKIDNKVVRVPYVGVDKDNLAEFSKK.

The first 23 residues, 1–23, serve as a signal peptide directing secretion; that stretch reads MNKKVLTLSAVMASMLFGAAAHA. Positions 37 and 114 each coordinate beta-D-galactose. The beta-D-glucose site is built by Asp-37 and Asn-114. The Ca(2+) site is built by Asp-157, Asn-159, Asp-161, Gln-163, and Gln-165. The beta-D-galactose site is built by His-175, Asp-177, and Arg-181. Beta-D-glucose-binding residues include His-175, Asp-177, and Arg-181. Glu-228 serves as a coordination point for Ca(2+). Positions 234, 259, and 279 each coordinate beta-D-galactose. Residues Asn-234, Asp-259, and Asn-279 each coordinate beta-D-glucose.

This sequence belongs to the bacterial solute-binding protein 2 family. The ABC transporter complex is composed of one ATP-binding protein (MglA), two transmembrane proteins (MglC) and a solute-binding protein (MglB).

It is found in the periplasm. Its function is as follows. Part of the ABC transporter complex MglABC involved in galactose/methyl galactoside import. In addition, binds D-galactose and D-glucose and plays a role in the chemotaxis towards these two sugars by interacting with the Trg chemoreceptor. This is D-galactose/methyl-galactoside binding periplasmic protein MglB (mglB) from Escherichia coli O6:H1 (strain CFT073 / ATCC 700928 / UPEC).